A 179-amino-acid polypeptide reads, in one-letter code: Adenine phosphoribosyltransferase (179 aa).

This sequence belongs to the purine/pyrimidine phosphoribosyltransferase family. As to quaternary structure, homodimer.

The protein localises to the cytoplasm. The enzyme catalyses AMP + diphosphate = 5-phospho-alpha-D-ribose 1-diphosphate + adenine. Its pathway is purine metabolism; AMP biosynthesis via salvage pathway; AMP from adenine: step 1/1. Catalyzes a salvage reaction resulting in the formation of AMP, that is energically less costly than de novo synthesis. This is Adenine phosphoribosyltransferase from Helicobacter pylori (strain J99 / ATCC 700824) (Campylobacter pylori J99).